The primary structure comprises 113 residues: Hydrogenase maturation factor HybF (113 aa).

Ni(2+) contacts are provided by H2 and E3. The Zn(2+) site is built by C73, C76, C89, and C92.

Belongs to the HypA/HybF family. HybF subfamily.

In terms of biological role, involved in the maturation of [NiFe] hydrogenases. Required for nickel insertion into the metal center of the hydrogenase. This chain is Hydrogenase maturation factor HybF, found in Salmonella typhi.